The chain runs to 138 residues: Small ribosomal subunit protein uS11c (138 aa).

Positions 1 to 22 (MAKLLPRIGSRKNGRISSRKNA) are disordered. Basic residues predominate over residues 9-22 (GSRKNGRISSRKNA).

Belongs to the universal ribosomal protein uS11 family. As to quaternary structure, part of the 30S ribosomal subunit.

The protein resides in the plastid. Its subcellular location is the chloroplast. This chain is Small ribosomal subunit protein uS11c, found in Populus alba (White poplar).